The following is a 486-amino-acid chain: Dipeptide and tripeptide permease B (486 aa).

Residues 1-27 are Cytoplasmic-facing; sequence MNKPVSIGLLQQPKPFFMIFFVELWER. A helical transmembrane segment spans residues 28 to 48; that stretch reads FGYYGVQGVLTVYFVQKLGFS. The Periplasmic portion of the chain corresponds to 49–52; the sequence is QEQA. A helical transmembrane segment spans residues 53–73; that stretch reads FITFGAFAALVFGLISIGGYV. At 74-82 the chain is on the cytoplasmic side; sequence GDHLLGTKR. A helical membrane pass occupies residues 83–103; sequence TIVLGAIVLAIGYFMTGLSIL. Residues 104–106 are Periplasmic-facing; it reads HPN. A helical membrane pass occupies residues 107-127; sequence LIFYALGTIAVGNGLFKANPA. Topologically, residues 128–146 are cytoplasmic; that stretch reads SLLSKCYPPKDPRLDGAFT. Residues 147 to 167 form a helical membrane-spanning segment; that stretch reads LFYMSINLGSLFSLALAPVIA. Over 168 to 172 the chain is Periplasmic; the sequence is EKFSY. The chain crosses the membrane as a helical span at residues 173-193; the sequence is AVTYNICGIGLIIALLVYIFC. Topologically, residues 194–211 are cytoplasmic; that stretch reads RNTVRNIGSEPDHQRINY. A helical membrane pass occupies residues 212-232; that stretch reads TNLFLVVAGSVVMVYVCAWLM. Residue His233 is a topological domain, periplasmic. Residues 234–254 form a helical membrane-spanning segment; that stretch reads NVKIANIMLITLSVIVVFIFF. The Cytoplasmic segment spans residues 255-267; the sequence is REALKQDKIGRNK. The helical transmembrane segment at 268–288 threads the bilayer; sequence MFVAFILMLQAIVFFILYAQM. The Periplasmic segment spans residues 289-311; that stretch reads PTSLNFFAIHNVHHQLLGFNINP. A helical transmembrane segment spans residues 312–332; it reads VSFQALNPFWIVVASPILAVL. The Cytoplasmic portion of the chain corresponds to 333–348; sequence YTHWGAKGKDLTMPAK. A helical transmembrane segment spans residues 349 to 369; sequence FAVGMFLCSLGFLTAAAAGLW. Topologically, residues 370 to 375 are periplasmic; that stretch reads FADEQG. A helical transmembrane segment spans residues 376–396; the sequence is LTSAWFIVLVYLFQGVGELMI. The Cytoplasmic segment spans residues 397 to 419; the sequence is SALGLAMIAALVPQYLMGFILGM. A helical membrane pass occupies residues 420–440; that stretch reads WYLTQATSSLLGGYVAALTAA. The Periplasmic portion of the chain corresponds to 441–456; the sequence is PKGITDPLQTLPVYTS. Residues 457–477 form a helical membrane-spanning segment; that stretch reads VFGKIGIATFIVAIIMAATVP. Residues 478–486 are Cytoplasmic-facing; that stretch reads LLNRMMQEK.

It belongs to the major facilitator superfamily. Proton-dependent oligopeptide transporter (POT/PTR) (TC 2.A.17) family. DtpB subfamily.

The protein localises to the cell inner membrane. Proton-dependent permease that transports di- and tripeptides. In Photorhabdus luminescens (Xenorhabdus luminescens), this protein is Dipeptide and tripeptide permease B.